Reading from the N-terminus, the 270-residue chain is Phosphatidylglycerol--prolipoprotein diacylglyceryl transferase (270 aa).

Helical transmembrane passes span 19–39 (FPVY…LWLA), 56–76 (LVLI…VIFE), 92–112 (QGGL…VLFA), and 116–136 (GVSF…GQAI). Arginine 138 provides a ligand contact to a 1,2-diacyl-sn-glycero-3-phospho-(1'-sn-glycerol). Helical transmembrane passes span 178 to 198 (HPTF…LLAL), 206 to 226 (GELF…VEGL), and 236 to 256 (LRIA…FIIV).

The protein belongs to the Lgt family.

Its subcellular location is the cell membrane. The enzyme catalyses L-cysteinyl-[prolipoprotein] + a 1,2-diacyl-sn-glycero-3-phospho-(1'-sn-glycerol) = an S-1,2-diacyl-sn-glyceryl-L-cysteinyl-[prolipoprotein] + sn-glycerol 1-phosphate + H(+). Its pathway is protein modification; lipoprotein biosynthesis (diacylglyceryl transfer). Functionally, catalyzes the transfer of the diacylglyceryl group from phosphatidylglycerol to the sulfhydryl group of the N-terminal cysteine of a prolipoprotein, the first step in the formation of mature lipoproteins. The polypeptide is Phosphatidylglycerol--prolipoprotein diacylglyceryl transferase (Bacillus cereus (strain B4264)).